The primary structure comprises 150 residues: MQIILLEKVANLGNLGDIVKVKDGYARNFLIPNRKARRATKEAIAEFEVRRAELEKVAAEKLAASQAVGEKLNGQSFEITQKSGVDGRLFGSVTNGDIAELLKKAGYEVEKLQVRMPEGPLKMIGEHTVQVALHTDVVVDVTINVIGDHA.

This sequence belongs to the bacterial ribosomal protein bL9 family.

Functionally, binds to the 23S rRNA. This Burkholderia ambifaria (strain MC40-6) protein is Large ribosomal subunit protein bL9.